Reading from the N-terminus, the 697-residue chain is Phosphate acetyltransferase (697 aa).

Residues Leu374–Lys697 form a phosphate acetyltransferase region.

In the N-terminal section; belongs to the CobB/CobQ family. It in the C-terminal section; belongs to the phosphate acetyltransferase and butyryltransferase family.

The protein localises to the cytoplasm. The enzyme catalyses acetyl-CoA + phosphate = acetyl phosphate + CoA. It participates in metabolic intermediate biosynthesis; acetyl-CoA biosynthesis; acetyl-CoA from acetate: step 2/2. In terms of biological role, involved in acetate metabolism. This is Phosphate acetyltransferase (pta) from Synechocystis sp. (strain ATCC 27184 / PCC 6803 / Kazusa).